The sequence spans 260 residues: Endomucin (260 aa).

The N-terminal stretch at 1–18 (MELLQVTILFLLPSICSS) is a signal peptide. N-linked (GlcNAc...) asparagine glycosylation is found at N19, N28, N97, and N103. Over 19 to 189 (NSTGVLEAAN…TSATSRSYSS (171 aa)) the chain is Extracellular. 2 stretches are compositionally biased toward polar residues: residues 119–133 (QSSK…SIKT) and 145–170 (ASPS…SQVI). A disordered region spans residues 119–182 (QSSKPKTETQ…EGGKNASTSA (64 aa)). N-linked (GlcNAc...) asparagine glycans are attached at residues N163 and N177. The chain crosses the membrane as a helical span at residues 190-210 (IILPVVIALIVITLSVFVLVG). Residues 211–260 (LYRMCWKADPGTPENGNDQPQSDKESVKLLTVKTISHESGEHSAQGKTKN) are Cytoplasmic-facing. Position 236 is a phosphoserine (S236).

Highly O-glycosylated. Sialic acid-rich glycoprotein.

The protein resides in the membrane. Its function is as follows. Endothelial sialomucin, also called endomucin or mucin-like sialoglycoprotein, which interferes with the assembly of focal adhesion complexes and inhibits interaction between cells and the extracellular matrix. The protein is Endomucin (EMCN) of Pongo abelii (Sumatran orangutan).